Reading from the N-terminus, the 952-residue chain is Leucine--tRNA ligase (952 aa).

The 'HIGH' region motif lies at 48–58 (PYLNGVLHAGH). A 'KMSKS' region motif is present at residues 644-648 (KLSKS). Residue Lys647 participates in ATP binding.

This sequence belongs to the class-I aminoacyl-tRNA synthetase family.

It is found in the cytoplasm. The enzyme catalyses tRNA(Leu) + L-leucine + ATP = L-leucyl-tRNA(Leu) + AMP + diphosphate. This is Leucine--tRNA ligase from Methanococcus vannielii (strain ATCC 35089 / DSM 1224 / JCM 13029 / OCM 148 / SB).